A 188-amino-acid polypeptide reads, in one-letter code: Elongation factor P (188 aa).

Residue Lys34 is modified to N6-(3,6-diaminohexanoyl)-5-hydroxylysine.

This sequence belongs to the elongation factor P family. In terms of processing, may be beta-lysylated on the epsilon-amino group of Lys-34 by the combined action of EpmA and EpmB, and then hydroxylated on the C5 position of the same residue by EpmC (if this protein is present). Lysylation is critical for the stimulatory effect of EF-P on peptide-bond formation. The lysylation moiety may extend toward the peptidyltransferase center and stabilize the terminal 3-CCA end of the tRNA. Hydroxylation of the C5 position on Lys-34 may allow additional potential stabilizing hydrogen-bond interactions with the P-tRNA.

The protein localises to the cytoplasm. It functions in the pathway protein biosynthesis; polypeptide chain elongation. In terms of biological role, involved in peptide bond synthesis. Alleviates ribosome stalling that occurs when 3 or more consecutive Pro residues or the sequence PPG is present in a protein, possibly by augmenting the peptidyl transferase activity of the ribosome. Modification of Lys-34 is required for alleviation. The protein is Elongation factor P of Photobacterium profundum (strain SS9).